Reading from the N-terminus, the 691-residue chain is ATP-dependent zinc metalloprotease FtsH 2 (691 aa).

Residues 1–48 (MTDEPQSDEQQTTEQERPLGTKRATRADGLRRPGVRSGLAERRSPAAD) are disordered. The Cytoplasmic portion of the chain corresponds to 1-64 (MTDEPQSDEQ…AAVRRFLLRD (64 aa)). Positions 14 to 31 (EQERPLGTKRATRADGLR) are enriched in basic and acidic residues. Residues 65–85 (VFALGLMIAALVIVILFFTLL) traverse the membrane as a helical segment. Over 86 to 168 (GATKPTSSGT…AVKQQPGKAQ (83 aa)) the chain is Extracellular. A helical membrane pass occupies residues 169-189 (VTIVVQFLLPILLLVCLFALF). Residues 190 to 691 (MRIGQDGGAG…ERGSARDRDA (502 aa)) are Cytoplasmic-facing. 265–272 (GPPGTGKT) lines the ATP pocket. Histidine 486 is a Zn(2+) binding site. The active site involves glutamate 487. Positions 490 and 563 each coordinate Zn(2+).

The protein in the central section; belongs to the AAA ATPase family. It in the C-terminal section; belongs to the peptidase M41 family. Homohexamer. The cofactor is Zn(2+).

The protein localises to the cell membrane. Functionally, acts as a processive, ATP-dependent zinc metallopeptidase for both cytoplasmic and membrane proteins. Plays a role in the quality control of integral membrane proteins. This chain is ATP-dependent zinc metalloprotease FtsH 2, found in Conexibacter woesei (strain DSM 14684 / CCUG 47730 / CIP 108061 / JCM 11494 / NBRC 100937 / ID131577).